The primary structure comprises 350 residues: Cobalt-precorrin-5B C(1)-methyltransferase (350 aa).

Belongs to the CbiD family.

The catalysed reaction is Co-precorrin-5B + S-adenosyl-L-methionine = Co-precorrin-6A + S-adenosyl-L-homocysteine. Its pathway is cofactor biosynthesis; adenosylcobalamin biosynthesis; cob(II)yrinate a,c-diamide from sirohydrochlorin (anaerobic route): step 6/10. Its function is as follows. Catalyzes the methylation of C-1 in cobalt-precorrin-5B to form cobalt-precorrin-6A. This Sulfurisphaera tokodaii (strain DSM 16993 / JCM 10545 / NBRC 100140 / 7) (Sulfolobus tokodaii) protein is Cobalt-precorrin-5B C(1)-methyltransferase.